We begin with the raw amino-acid sequence, 329 residues long: BTB/POZ domain-containing protein At1g55760 (329 aa).

The 68-residue stretch at 164 to 231 (TDITINASDG…IYGNIQNEDF (68 aa)) folds into the BTB domain.

Its pathway is protein modification; protein ubiquitination. Its function is as follows. May act as a substrate-specific adapter of an E3 ubiquitin-protein ligase complex (CUL3-RBX1-BTB) which mediates the ubiquitination and subsequent proteasomal degradation of target proteins. In Arabidopsis thaliana (Mouse-ear cress), this protein is BTB/POZ domain-containing protein At1g55760.